A 765-amino-acid polypeptide reads, in one-letter code: 5-methyltetrahydropteroyltriglutamate--homocysteine methyltransferase (765 aa).

5-methyltetrahydropteroyltri-L-glutamate is bound by residues 18–21 and Lys114; that span reads REWK. Residues 437 to 439 and Glu490 each bind L-homocysteine; that span reads IGS. Residues 437 to 439 and Glu490 contribute to the L-methionine site; that span reads IGS. Trp567 is a 5-methyltetrahydropteroyltri-L-glutamate binding site. Asp605 contributes to the L-homocysteine binding site. Asp605 provides a ligand contact to L-methionine. Glu611 contacts 5-methyltetrahydropteroyltri-L-glutamate. 3 residues coordinate Zn(2+): His647, Cys649, and Glu671. His700 (proton donor) is an active-site residue. Residue Cys732 participates in Zn(2+) binding.

Belongs to the vitamin-B12 independent methionine synthase family. The cofactor is Zn(2+).

The enzyme catalyses 5-methyltetrahydropteroyltri-L-glutamate + L-homocysteine = tetrahydropteroyltri-L-glutamate + L-methionine. It functions in the pathway amino-acid biosynthesis; L-methionine biosynthesis via de novo pathway; L-methionine from L-homocysteine (MetE route): step 1/1. Functionally, catalyzes the transfer of a methyl group from 5-methyltetrahydrofolate to homocysteine resulting in methionine formation. The polypeptide is 5-methyltetrahydropteroyltriglutamate--homocysteine methyltransferase (Listeria innocua serovar 6a (strain ATCC BAA-680 / CLIP 11262)).